We begin with the raw amino-acid sequence, 426 residues long: 3',5'-cyclic-nucleotide phosphodiesterase (426 aa).

Residues Asp-210–Gly-229 form a disordered region.

Belongs to the cyclic nucleotide phosphodiesterase class-II family.

The enzyme catalyses a nucleoside 3',5'-cyclic phosphate + H2O = a nucleoside 5'-phosphate + H(+). The chain is 3',5'-cyclic-nucleotide phosphodiesterase (PDE1) from Candida albicans (Yeast).